Here is a 1007-residue protein sequence, read N- to C-terminus: Lysosomal alpha-mannosidase (1007 aa).

The N-terminal stretch at 1–47 (MGASVLPLGLGAGDCQSSSGRRMSACLPRTALSFLLSLLLATPGARA) is a signal peptide. 2 disulfide bridges follow: C53-C356 and C266-C271. Residues H70 and D72 each contribute to the Zn(2+) site. N131 carries N-linked (GlcNAc...) asparagine glycosylation. A Zn(2+)-binding site is contributed by D194. D194 serves as the catalytic Nucleophile. 3 N-linked (GlcNAc...) asparagine glycosylation sites follow: N308, N343, and N365. Disulfide bonds link C410–C470 and C491–C499. H444 contacts Zn(2+). Residues N495, N540, N639, N686, N760, and N927 are each glycosylated (N-linked (GlcNAc...) asparagine).

The protein belongs to the glycosyl hydrolase 38 family. It depends on Zn(2+) as a cofactor.

The protein localises to the lysosome. It carries out the reaction Hydrolysis of terminal, non-reducing alpha-D-mannose residues in alpha-D-mannosides.. Its function is as follows. Necessary for the catabolism of N-linked carbohydrates released during glycoprotein turnover. The polypeptide is Lysosomal alpha-mannosidase (MAN2B1) (Cavia porcellus (Guinea pig)).